A 974-amino-acid chain; its full sequence is Pentatricopeptide repeat-containing protein At5g61990, mitochondrial (974 aa).

The transit peptide at 1 to 31 directs the protein to the mitochondrion; sequence MMGSMLFRKRTLVTRANFLLFRSFSVNVEKL. PPR repeat units lie at residues 96–130, 150–184, 185–219, 220–250, 257–275, 276–310, 311–345, 346–380, 381–415, 416–450, 451–485, 486–520, 521–555, 556–590, 591–625, 626–660, 661–695, 696–730, 731–761, 765–799, 804–838, 839–873, 874–908, and 914–948; these read KLDS…NWPV, DGVL…ELVP, RLSR…NVVF, DVKT…TEKE, NVDG…GLVP, LKYT…GVSL, DNHT…GINI, KPYM…GLIP, QAQA…NIVI, SPYT…GCRP, NVVI…GIAP, DIFC…GLKP, NAFT…GVLP, NKVL…GILG, DAKT…GIAP, DVFS…GLTP, NVII…GLHP, NAVT…GLVP, DSFV…NKKG, STAP…SFDR, NDVT…NLMP, TVIT…GIEP, DHIM…NAVD, and SIST…QYIP.

It belongs to the PPR family. P subfamily.

It localises to the mitochondrion. This chain is Pentatricopeptide repeat-containing protein At5g61990, mitochondrial, found in Arabidopsis thaliana (Mouse-ear cress).